Reading from the N-terminus, the 301-residue chain is HTH-type transcriptional regulator EstR (301 aa).

The HTH lysR-type domain maps to 5–62 (PSLRQLSYLVTLSETLHFTEAARRSFVTQSTLSGGIMELERLLGGVLVERDRQNVRLT). The H-T-H motif DNA-binding region spans 22–41 (FTEAARRSFVTQSTLSGGIM).

It belongs to the LysR transcriptional regulatory family.

Functionally, transcriptional regulator of the esterase operon. This is HTH-type transcriptional regulator EstR (estR) from Acinetobacter baylyi (strain ATCC 33305 / BD413 / ADP1).